Consider the following 75-residue polypeptide: Defensin-like protein 59 (75 aa).

The first 19 residues, 1-19 (MNITKSYVVIFFLVMLTNS), serve as a signal peptide directing secretion. Cystine bridges form between Cys-39/Cys-73, Cys-43/Cys-66, Cys-52/Cys-71, and Cys-56/Cys-72.

Belongs to the DEFL family.

The protein resides in the secreted. This is Defensin-like protein 59 from Arabidopsis thaliana (Mouse-ear cress).